We begin with the raw amino-acid sequence, 285 residues long: Release factor glutamine methyltransferase (285 aa).

S-adenosyl-L-methionine-binding positions include 124 to 128 (GTGSG), Asp-147, and Asn-190. 190 to 193 (NPPY) is a binding site for substrate.

It belongs to the protein N5-glutamine methyltransferase family. PrmC subfamily.

It catalyses the reaction L-glutaminyl-[peptide chain release factor] + S-adenosyl-L-methionine = N(5)-methyl-L-glutaminyl-[peptide chain release factor] + S-adenosyl-L-homocysteine + H(+). In terms of biological role, methylates the class 1 translation termination release factors RF1/PrfA and RF2/PrfB on the glutamine residue of the universally conserved GGQ motif. In Flavobacterium psychrophilum (strain ATCC 49511 / DSM 21280 / CIP 103535 / JIP02/86), this protein is Release factor glutamine methyltransferase.